The chain runs to 629 residues: Arginine--tRNA ligase (629 aa).

A 'HIGH' region motif is present at residues 128–138 (VNPTKPLHMGH).

It belongs to the class-I aminoacyl-tRNA synthetase family.

The protein resides in the cytoplasm. It carries out the reaction tRNA(Arg) + L-arginine + ATP = L-arginyl-tRNA(Arg) + AMP + diphosphate. This chain is Arginine--tRNA ligase, found in Pyrococcus furiosus (strain ATCC 43587 / DSM 3638 / JCM 8422 / Vc1).